A 209-amino-acid polypeptide reads, in one-letter code: Small ribosomal subunit protein uS3c (209 aa).

The KH type-2 domain maps to 39 to 109 (IRSCIEKQLH…QIRINLIEIT (71 aa)).

It belongs to the universal ribosomal protein uS3 family. In terms of assembly, part of the 30S ribosomal subunit.

The protein localises to the plastid. It localises to the chloroplast. This Gracilaria tenuistipitata (Red alga) protein is Small ribosomal subunit protein uS3c (rps3).